Reading from the N-terminus, the 596-residue chain is UvrABC system protein C (596 aa).

A GIY-YIG domain is found at 14-91; it reads QQPGCYLMKD…IKKYDPRYNV (78 aa). Residues 196 to 231 form the UVR domain; that stretch reads KDIRKNLAGEMQKASEALNFERAKEIRDTIQHIDAT.

It belongs to the UvrC family. In terms of assembly, interacts with UvrB in an incision complex.

The protein resides in the cytoplasm. The UvrABC repair system catalyzes the recognition and processing of DNA lesions. UvrC both incises the 5' and 3' sides of the lesion. The N-terminal half is responsible for the 3' incision and the C-terminal half is responsible for the 5' incision. The sequence is that of UvrABC system protein C from Oceanobacillus iheyensis (strain DSM 14371 / CIP 107618 / JCM 11309 / KCTC 3954 / HTE831).